We begin with the raw amino-acid sequence, 536 residues long: Cytochrome P450 monooxygenase pbrC (536 aa).

A helical transmembrane segment spans residues 20 to 39 (VMLPALVGFAFLIYQAFFAI). Residue Cys479 participates in heme binding.

Belongs to the cytochrome P450 family. Requires heme as cofactor.

It is found in the membrane. It participates in secondary metabolite biosynthesis; terpenoid biosynthesis. Cytochrome P450 monooxygenase; part of the gene cluster that mediates the biosynthesis of the sesquiterpenoid aspterric acid (AA), an inhibitor of dihydroxy-acid dehydratase (DHAD) effective as an herbicide. PbrC catalyzes the third and last step within the pathway and converts the alpha-epoxy carboxylate intermediate produced by the cytochrome P450 monooxygenase pbrB from (-)daucane into the tricyclic aspterric acid. This is Cytochrome P450 monooxygenase pbrC from Penicillium brasilianum.